Reading from the N-terminus, the 1188-residue chain is Spermatogenesis-associated protein 31C1 (1188 aa).

Residues 23-43 form a helical membrane-spanning segment; the sequence is PWVLDIFLTLVFALGLFFLLL. Disordered regions lie at residues 57 to 92, 121 to 249, 483 to 510, 530 to 567, 733 to 813, 934 to 1013, 1121 to 1143, and 1155 to 1188; these read PSPRKRKRHLVSQRHLVSQCPTGRRGRPRGRMKNHS, LEKG…LLTP, PGTSQAKGKPRPWQSSTSTGESSKEAQT, TPQNLSRGMESFPGKVLGATSEESERNLRKPLRSDSGS, MPER…PTVP, NMGH…PSIS, QQATLKNQSRPNRDRQIRDQQPL, and LRHPQLLLPKKAVSPVSPPQHRPKTPSASSHHHH. 2 stretches are compositionally biased toward basic residues: residues 59–68 and 80–92; these read PRKRKRHLVS and RRGRPRGRMKNHS. The segment covering 138–154 has biased composition (basic and acidic residues); the sequence is VGKRTPDGASRSSHEPM. Residues 191–207 are compositionally biased toward low complexity; the sequence is SSLSASQPPEPSLLLER. Positions 210 to 241 are enriched in pro residues; it reads PEPPALFPHPPHTPDPLACSPPPPKGFTPPPL. The span at 495 to 510 shows a compositional bias: polar residues; sequence WQSSTSTGESSKEAQT. Polar residues-rich tracts occupy residues 783–800 and 943–954; these read LKGSTQQSRSLGAQSSRA and PNCQGSCKSQSP. Basic and acidic residues predominate over residues 960–976; it reads HKRENSRKPNLEKHEEM. Residues 1121–1130 are compositionally biased toward polar residues; it reads QQATLKNQSR.

Belongs to the SPATA31 family.

It localises to the membrane. Functionally, may play a role in spermatogenesis. This chain is Spermatogenesis-associated protein 31C1 (SPATA31C1), found in Homo sapiens (Human).